Consider the following 354-residue polypeptide: Probable L-ascorbate-6-phosphate lactonase UlaG (354 aa).

It belongs to the UlaG family. It depends on a divalent metal cation as a cofactor.

Its subcellular location is the cytoplasm. It carries out the reaction L-ascorbate 6-phosphate + H2O = 3-dehydro-L-gulonate 6-phosphate. Its pathway is cofactor degradation; L-ascorbate degradation; D-xylulose 5-phosphate from L-ascorbate: step 1/4. Probably catalyzes the hydrolysis of L-ascorbate-6-P into 3-keto-L-gulonate-6-P. Is essential for L-ascorbate utilization under anaerobic conditions. The protein is Probable L-ascorbate-6-phosphate lactonase UlaG of Escherichia fergusonii (strain ATCC 35469 / DSM 13698 / CCUG 18766 / IAM 14443 / JCM 21226 / LMG 7866 / NBRC 102419 / NCTC 12128 / CDC 0568-73).